The following is a 223-amino-acid chain: Ribonuclease 3 (223 aa).

The RNase III domain maps to 4 to 127 (YSQLEKRLNY…IIGAVYLEAG (124 aa)). A Mg(2+)-binding site is contributed by E40. D44 is an active-site residue. Residues N113 and E116 each contribute to the Mg(2+) site. Residue E116 is part of the active site. The 70-residue stretch at 154 to 223 (DYKTALQELT…AKIALEALKK (70 aa)) folds into the DRBM domain.

It belongs to the ribonuclease III family. In terms of assembly, homodimer. Mg(2+) serves as cofactor.

It is found in the cytoplasm. The catalysed reaction is Endonucleolytic cleavage to 5'-phosphomonoester.. Its function is as follows. Digests double-stranded RNA. Involved in the processing of primary rRNA transcript to yield the immediate precursors to the large and small rRNAs (23S and 16S). Processes some mRNAs, and tRNAs when they are encoded in the rRNA operon. Processes pre-crRNA and tracrRNA of type II CRISPR loci if present in the organism. In Sulfurovum sp. (strain NBC37-1), this protein is Ribonuclease 3.